The sequence spans 110 residues: Phosphoribosyl-ATP pyrophosphatase (110 aa).

Belongs to the PRA-PH family.

The protein resides in the cytoplasm. It catalyses the reaction 1-(5-phospho-beta-D-ribosyl)-ATP + H2O = 1-(5-phospho-beta-D-ribosyl)-5'-AMP + diphosphate + H(+). Its pathway is amino-acid biosynthesis; L-histidine biosynthesis; L-histidine from 5-phospho-alpha-D-ribose 1-diphosphate: step 2/9. The sequence is that of Phosphoribosyl-ATP pyrophosphatase (hisE) from Azotobacter chroococcum mcd 1.